A 257-amino-acid polypeptide reads, in one-letter code: NAD-capped RNA hydrolase NudC (257 aa).

Substrate-binding residues include K25 and R69. Zn(2+) is bound by residues C98 and C101. E111 contacts substrate. Zn(2+) is bound by residues C116 and C119. Residue Y124 participates in substrate binding. Residues 125–248 (PQIAPCIIVA…TVARRLIEDT (124 aa)) form the Nudix hydrolase domain. A158, E174, and E178 together coordinate a divalent metal cation. Residues 159–180 (GFVEVGETLEQAVAREVMEESG) carry the Nudix box motif. 192–199 (QPWPFPQS) contacts substrate. E219 serves as a coordination point for a divalent metal cation. A241 serves as a coordination point for substrate.

Belongs to the Nudix hydrolase family. NudC subfamily. As to quaternary structure, homodimer. Requires Mg(2+) as cofactor. It depends on Mn(2+) as a cofactor. The cofactor is Zn(2+).

It carries out the reaction a 5'-end NAD(+)-phospho-ribonucleoside in mRNA + H2O = a 5'-end phospho-adenosine-phospho-ribonucleoside in mRNA + beta-nicotinamide D-ribonucleotide + 2 H(+). The catalysed reaction is NAD(+) + H2O = beta-nicotinamide D-ribonucleotide + AMP + 2 H(+). The enzyme catalyses NADH + H2O = reduced beta-nicotinamide D-ribonucleotide + AMP + 2 H(+). Functionally, mRNA decapping enzyme that specifically removes the nicotinamide adenine dinucleotide (NAD) cap from a subset of mRNAs by hydrolyzing the diphosphate linkage to produce nicotinamide mononucleotide (NMN) and 5' monophosphate mRNA. The NAD-cap is present at the 5'-end of some mRNAs and stabilizes RNA against 5'-processing. Has preference for mRNAs with a 5'-end purine. Catalyzes the hydrolysis of a broad range of dinucleotide pyrophosphates. This is NAD-capped RNA hydrolase NudC from Shigella dysenteriae serotype 1 (strain Sd197).